Consider the following 376-residue polypeptide: Putative F-box/FBD/LRR-repeat protein At5g52460 (376 aa).

In terms of domain architecture, F-box spans 16–75 (RDEISSLPDDLLIQILLLVPIKDAVGTMILSKRWRYVWTLLPKLEYSDPGDECESVWKFL). LRR repeat units lie at residues 131-154 (CKTLVELTLSDKIIVDVPSSVCLP) and 199-224 (FAKVHKLRLEKPHIDVVCHTDDKFLK). The region spanning 296-348 (CHGTNQGTVPRCLSAHLDEEFVWHGYRGNEEETQLIRYIFANAKCLKKREIST) is the FBD domain.

The sequence is that of Putative F-box/FBD/LRR-repeat protein At5g52460 (EDA41) from Arabidopsis thaliana (Mouse-ear cress).